The chain runs to 273 residues: Type III pantothenate kinase (273 aa).

5 to 12 (DVGNSHVV) is an ATP binding site. Residue 112 to 115 (GTDL) coordinates substrate. Aspartate 114 functions as the Proton acceptor in the catalytic mechanism. K(+) is bound at residue aspartate 134. An ATP-binding site is contributed by threonine 137. Threonine 189 serves as a coordination point for substrate.

It belongs to the type III pantothenate kinase family. Homodimer. The cofactor is NH4(+). K(+) serves as cofactor.

It localises to the cytoplasm. The enzyme catalyses (R)-pantothenate + ATP = (R)-4'-phosphopantothenate + ADP + H(+). It functions in the pathway cofactor biosynthesis; coenzyme A biosynthesis; CoA from (R)-pantothenate: step 1/5. Functionally, catalyzes the phosphorylation of pantothenate (Pan), the first step in CoA biosynthesis. This is Type III pantothenate kinase from Treponema pallidum (strain Nichols).